A 189-amino-acid polypeptide reads, in one-letter code: Probable nicotinate-nucleotide adenylyltransferase (189 aa).

It belongs to the NadD family.

The catalysed reaction is nicotinate beta-D-ribonucleotide + ATP + H(+) = deamido-NAD(+) + diphosphate. Its pathway is cofactor biosynthesis; NAD(+) biosynthesis; deamido-NAD(+) from nicotinate D-ribonucleotide: step 1/1. Functionally, catalyzes the reversible adenylation of nicotinate mononucleotide (NaMN) to nicotinic acid adenine dinucleotide (NaAD). In Bacillus cereus (strain B4264), this protein is Probable nicotinate-nucleotide adenylyltransferase.